Here is a 179-residue protein sequence, read N- to C-terminus: Large ribosomal subunit protein uL5 (179 aa).

The protein belongs to the universal ribosomal protein uL5 family. As to quaternary structure, part of the 50S ribosomal subunit; part of the 5S rRNA/L5/L18/L25 subcomplex. Contacts the 5S rRNA and the P site tRNA. Forms a bridge to the 30S subunit in the 70S ribosome.

In terms of biological role, this is one of the proteins that bind and probably mediate the attachment of the 5S RNA into the large ribosomal subunit, where it forms part of the central protuberance. In the 70S ribosome it contacts protein S13 of the 30S subunit (bridge B1b), connecting the 2 subunits; this bridge is implicated in subunit movement. Contacts the P site tRNA; the 5S rRNA and some of its associated proteins might help stabilize positioning of ribosome-bound tRNAs. This is Large ribosomal subunit protein uL5 from Shouchella clausii (strain KSM-K16) (Alkalihalobacillus clausii).